We begin with the raw amino-acid sequence, 199 residues long: Patulin biosynthesis cluster protein F (199 aa).

The N-terminal stretch at 1-21 is a signal peptide; sequence MKSSLWVSLAVSLIGLGPAAA. Asn-129 and Asn-183 each carry an N-linked (GlcNAc...) asparagine glycan.

This sequence belongs to the patF family.

It is found in the cytoplasm. The protein localises to the cytosol. The enzyme catalyses phyllostine = neopatulin. It functions in the pathway mycotoxin biosynthesis; patulin biosynthesis. In terms of biological role, part of the gene cluster that mediates the biosynthesis of patulin, an acetate-derived tetraketide mycotoxin produced by several fungal species that shows antimicrobial properties against several bacteria. PatF catalyzes the conversion of phyllostine into neopatulin. The pathway begins with the synthesis of 6-methylsalicylic acid by the polyketide synthase (PKS) patK via condensation of acetate and malonate units. The 6-methylsalicylic acid decarboxylase patG then catalyzes the decarboxylation of 6-methylsalicylic acid to yield m-cresol (also known as 3-methylphenol). These first reactions occur in the cytosol. The intermediate m-cresol is then transported into the endoplasmic reticulum where the cytochrome P450 monooxygenase patH converts it to m-hydroxybenzyl alcohol, which is further converted to gentisyl alcohol by the cytochrome P450 monooxygenase patI. The oxidoreductases patJ and patO further convert gentisyl alcohol to isoepoxydon in the vacuole. PatN catalyzes then the transformation of isoepoxydon into phyllostine. The cluster protein patF is responsible for the conversion from phyllostine to neopatulin whereas the alcohol dehydrogenase patD converts neopatulin to E-ascladiol. The steps between isoepoxydon and E-ascladiol occur in the cytosol, and E-ascladiol is probably secreted to the extracellular space by one of the cluster-specific transporters patC or patM. Finally, the secreted patulin synthase patE catalyzes the conversion of E-ascladiol to patulin. This chain is Patulin biosynthesis cluster protein F, found in Penicillium expansum (Blue mold rot fungus).